A 250-amino-acid chain; its full sequence is N-acetylmuramoyl-L-alanine amidase CwlH (250 aa).

The first 44 residues, 1–44 (MVTIKKDFIPVSNDNRPGYAMAPAYITVHNTANTAKGADAKMHA), serve as a signal peptide directing secretion. Positions 45-141 (KFVKNPNTSE…KKWSGKECPR (97 aa)) constitute an N-acetylmuramoyl-L-alanine amidase domain.

Belongs to the N-acetylmuramoyl-L-alanine amidase 2 family.

It localises to the secreted. It carries out the reaction Hydrolyzes the link between N-acetylmuramoyl residues and L-amino acid residues in certain cell-wall glycopeptides.. Its function is as follows. Autolysins are involved in some important biological processes such as cell separation, cell-wall turnover, competence for genetic transformation, formation of the flagella and sporulation. Could play a role in mother cell lysis with CwlC. The polypeptide is N-acetylmuramoyl-L-alanine amidase CwlH (cwlH) (Bacillus subtilis (strain 168)).